We begin with the raw amino-acid sequence, 158 residues long: Ribonuclease HI (158 aa).

The RNase H type-1 domain maps to 3-144; sequence ELKLIHIFTD…CDQLARAAAE (142 aa). Mg(2+)-binding residues include D12, E50, D72, and D136.

It belongs to the RNase H family. In terms of assembly, monomer. It depends on Mg(2+) as a cofactor.

Its subcellular location is the cytoplasm. The enzyme catalyses Endonucleolytic cleavage to 5'-phosphomonoester.. Functionally, endonuclease that specifically degrades the RNA of RNA-DNA hybrids. This Shewanella oneidensis (strain ATCC 700550 / JCM 31522 / CIP 106686 / LMG 19005 / NCIMB 14063 / MR-1) protein is Ribonuclease HI.